A 229-amino-acid polypeptide reads, in one-letter code: Cytidylate kinase (229 aa).

ATP is bound at residue 12-20; it reads GPSGSGKGT.

It belongs to the cytidylate kinase family. Type 1 subfamily.

Its subcellular location is the cytoplasm. The enzyme catalyses CMP + ATP = CDP + ADP. It catalyses the reaction dCMP + ATP = dCDP + ADP. The sequence is that of Cytidylate kinase from Pseudomonas fluorescens (strain Pf0-1).